A 614-amino-acid polypeptide reads, in one-letter code: Probable Xaa-Pro aminopeptidase P (614 aa).

The Mn(2+) site is built by aspartate 411, aspartate 422, glutamate 520, and glutamate 534.

The protein belongs to the peptidase M24B family. Mn(2+) serves as cofactor.

It carries out the reaction Release of any N-terminal amino acid, including proline, that is linked to proline, even from a dipeptide or tripeptide.. Catalyzes the removal of a penultimate prolyl residue from the N-termini of peptides. The protein is Probable Xaa-Pro aminopeptidase P (AMPP) of Sordaria macrospora (strain ATCC MYA-333 / DSM 997 / K(L3346) / K-hell).